We begin with the raw amino-acid sequence, 182 residues long: LPS-assembly lipoprotein LptE (182 aa).

A signal peptide spans 1-19; sequence MRHRILTLLLGLAVLVTAG. Residue cysteine 20 is the site of N-palmitoyl cysteine attachment. Cysteine 20 is lipidated: S-diacylglycerol cysteine.

It belongs to the LptE lipoprotein family. Component of the lipopolysaccharide transport and assembly complex. Interacts with LptD.

It localises to the cell outer membrane. Its function is as follows. Together with LptD, is involved in the assembly of lipopolysaccharide (LPS) at the surface of the outer membrane. Required for the proper assembly of LptD. Binds LPS and may serve as the LPS recognition site at the outer membrane. This Photorhabdus laumondii subsp. laumondii (strain DSM 15139 / CIP 105565 / TT01) (Photorhabdus luminescens subsp. laumondii) protein is LPS-assembly lipoprotein LptE.